A 78-amino-acid polypeptide reads, in one-letter code: Colicin-V immunity protein (78 aa).

Functionally, this protein is able to protect a cell, which harbors the plasmid ColV encoding colicin V, against colicin V. The protein is Colicin-V immunity protein (cvi) of Escherichia coli.